The chain runs to 253 residues: Bridging integrator 3 (253 aa).

Residues 9-232 form the BAR domain; the sequence is GQPKKQIVPK…LDQPGHSDEQ (224 aa). Coiled-coil stretches lie at residues 18–51, 120–152, and 231–247; these read KTVE…STDA, SLNM…EKTG, and EQRE…LRAL. Positions 220-240 are disordered; that stretch reads SHQLDQPGHSDEQRERENEAK. The segment covering 227 to 240 has biased composition (basic and acidic residues); that stretch reads GHSDEQRERENEAK.

As to expression, ubiquitously expressed except in brain.

The protein localises to the cytoplasm. It is found in the cytoskeleton. In terms of biological role, involved in cytokinesis and septation where it has a role in the localization of F-actin. The polypeptide is Bridging integrator 3 (BIN3) (Homo sapiens (Human)).